A 450-amino-acid polypeptide reads, in one-letter code: Probable glucan endo-1,3-beta-glucosidase eglC (450 aa).

The N-terminal stretch at 1–18 is a signal peptide; sequence MQFTHLVALALALATSEA. Glu128 (proton donor) is an active-site residue. Asn183 is a glycosylation site (N-linked (GlcNAc...) asparagine). Glu239 acts as the Nucleophile in catalysis. Residues Asn362 and Asn368 are each glycosylated (N-linked (GlcNAc...) asparagine). 2 stretches are compositionally biased toward low complexity: residues 377-395 and 405-420; these read SSAI…SGSS and ASGQ…SAPS. Positions 377–420 are disordered; the sequence is SSAISGSSSGSAAGSSGSSGSSGSGASGASGQSSSSTGSSSAPS. The GPI-anchor amidated asparagine moiety is linked to residue Asn427. A propeptide spans 428–450 (removed in mature form); sequence AASGLSGSICGAVVAVCLALAAL.

It belongs to the glycosyl hydrolase 17 family. Post-translationally, the GPI-anchor is attached to the protein in the endoplasmic reticulum and serves to target the protein to the cell surface. There, the glucosamine-inositol phospholipid moiety is cleaved off and the GPI-modified mannoprotein is covalently attached via its lipidless GPI glycan remnant to the 1,6-beta-glucan of the outer cell wall layer.

The protein resides in the cell membrane. It is found in the secreted. It localises to the cell wall. It catalyses the reaction Hydrolysis of (1-&gt;3)-beta-D-glucosidic linkages in (1-&gt;3)-beta-D-glucans.. Its function is as follows. Glucanases play a role in cell expansion during growth, in cell-cell fusion during mating, and in spore release during sporulation. This enzyme may be involved in beta-glucan degradation and also function biosynthetically as a transglycosylase. The chain is Probable glucan endo-1,3-beta-glucosidase eglC (eglC) from Aspergillus fumigatus (strain CBS 144.89 / FGSC A1163 / CEA10) (Neosartorya fumigata).